A 968-amino-acid polypeptide reads, in one-letter code: RNA polymerase-associated protein RapA (968 aa).

The region spanning 164–334 (DVGRRHAPRV…FARLRLLDPN (171 aa)) is the Helicase ATP-binding domain. Residue 177–184 (DEVGLGKT) coordinates ATP. Residues 280 to 283 (DEAH) carry the DEAH box motif. A Helicase C-terminal domain is found at 490–662 (RVEWLMGYLT…YLAAPENTEG (173 aa)).

It belongs to the SNF2/RAD54 helicase family. RapA subfamily. Interacts with the RNAP. Has a higher affinity for the core RNAP than for the holoenzyme. Its ATPase activity is stimulated by binding to RNAP.

Functionally, transcription regulator that activates transcription by stimulating RNA polymerase (RNAP) recycling in case of stress conditions such as supercoiled DNA or high salt concentrations. Probably acts by releasing the RNAP, when it is trapped or immobilized on tightly supercoiled DNA. Does not activate transcription on linear DNA. Probably not involved in DNA repair. The protein is RNA polymerase-associated protein RapA of Cronobacter sakazakii (strain ATCC BAA-894) (Enterobacter sakazakii).